A 181-amino-acid chain; its full sequence is Adenine phosphoribosyltransferase (181 aa).

It belongs to the purine/pyrimidine phosphoribosyltransferase family. As to quaternary structure, homodimer.

The protein resides in the cytoplasm. It catalyses the reaction AMP + diphosphate = 5-phospho-alpha-D-ribose 1-diphosphate + adenine. Its pathway is purine metabolism; AMP biosynthesis via salvage pathway; AMP from adenine: step 1/1. Catalyzes a salvage reaction resulting in the formation of AMP, that is energically less costly than de novo synthesis. The protein is Adenine phosphoribosyltransferase of Methylobacterium sp. (strain 4-46).